A 227-amino-acid polypeptide reads, in one-letter code: tRNA (guanine-N(1)-)-methyltransferase (227 aa).

S-adenosyl-L-methionine-binding positions include Gly107 and 127–132 (LGDFIL).

This sequence belongs to the RNA methyltransferase TrmD family. As to quaternary structure, homodimer.

Its subcellular location is the cytoplasm. The catalysed reaction is guanosine(37) in tRNA + S-adenosyl-L-methionine = N(1)-methylguanosine(37) in tRNA + S-adenosyl-L-homocysteine + H(+). Its function is as follows. Specifically methylates guanosine-37 in various tRNAs. In Mesomycoplasma hyopneumoniae (strain 232) (Mycoplasma hyopneumoniae), this protein is tRNA (guanine-N(1)-)-methyltransferase.